Reading from the N-terminus, the 193-residue chain is Pyridoxal 5'-phosphate synthase subunit PdxT (193 aa).

Position 48 to 50 (48 to 50 (GES)) interacts with L-glutamine. Catalysis depends on C80, which acts as the Nucleophile. Residues R109 and 137–138 (IR) contribute to the L-glutamine site. Residues H173 and E175 each act as charge relay system in the active site.

It belongs to the glutaminase PdxT/SNO family. In the presence of PdxS, forms a dodecamer of heterodimers. Only shows activity in the heterodimer.

The enzyme catalyses aldehydo-D-ribose 5-phosphate + D-glyceraldehyde 3-phosphate + L-glutamine = pyridoxal 5'-phosphate + L-glutamate + phosphate + 3 H2O + H(+). It catalyses the reaction L-glutamine + H2O = L-glutamate + NH4(+). Its pathway is cofactor biosynthesis; pyridoxal 5'-phosphate biosynthesis. In terms of biological role, catalyzes the hydrolysis of glutamine to glutamate and ammonia as part of the biosynthesis of pyridoxal 5'-phosphate. The resulting ammonia molecule is channeled to the active site of PdxS. The polypeptide is Pyridoxal 5'-phosphate synthase subunit PdxT (Mycobacteroides abscessus (strain ATCC 19977 / DSM 44196 / CCUG 20993 / CIP 104536 / JCM 13569 / NCTC 13031 / TMC 1543 / L948) (Mycobacterium abscessus)).